Consider the following 638-residue polypeptide: Probable potassium transport system protein Kup (638 aa).

Transmembrane regions (helical) follow at residues 25–45 (LAIA…LYSL), 65–85 (VISL…LLFV), 114–134 (AGAL…DAVI), 152–172 (PHLS…LFWI), 184–204 (FGPI…YHIV), 226–246 (LLQA…AEAL), 262–282 (AYGL…ALLI), 291–311 (PFFL…STVA), 352–372 (IYVP…VVGF), 382–402 (YGIA…VVMV), 410–430 (LLVG…FGAN), and 434–454 (VAQG…LLMT).

It belongs to the HAK/KUP transporter (TC 2.A.72) family.

Its subcellular location is the cell inner membrane. It catalyses the reaction K(+)(in) + H(+)(in) = K(+)(out) + H(+)(out). Its function is as follows. Transport of potassium into the cell. Likely operates as a K(+):H(+) symporter. The chain is Probable potassium transport system protein Kup from Burkholderia cenocepacia (strain HI2424).